Consider the following 287-residue polypeptide: Beta-lactamase GES-5 (287 aa).

The first 18 residues, 1–18 (MRFIHALLLAGIAHSAYA), serve as a signal peptide directing secretion. Cys-63 and Cys-233 are joined by a disulfide. Ser-64 (nucleophile; acyl-ester intermediate) is an active-site residue. 6 residues coordinate imipenem: Ser-64, Ser-125, Asn-127, Thr-230, Thr-232, and Arg-238.

It belongs to the class-A beta-lactamase family.

Its subcellular location is the secreted. It catalyses the reaction a beta-lactam + H2O = a substituted beta-amino acid. Its activity is regulated as follows. Inhibited by the beta-lactamase-blocking agents clavulanic acid, sulbactam and tazobactam, via a covalent binding to Ser-64. Confers resistance to penicillins, cephalosporins and carbapenems. Has carbapenem-hydrolyzing activity. This chain is Beta-lactamase GES-5, found in Klebsiella pneumoniae.